Here is an 854-residue protein sequence, read N- to C-terminus: Envelope glycoprotein gp160 (854 aa).

A signal peptide spans 1–31 (MKVMEKKKRDWNSLSIITIITIILLTPCLTS). The Extracellular segment spans residues 32–675 (ELWVTVYYGV…ITKWLWYIKI (644 aa)). Cystine bridges form between C53–C73, C118–C203, C125–C194, C130–C155, C216–C245, and C226–C237. Residues 130-154 (CSKANFSQAKNLTNQTSSPPLEMKN) are V1. 7 N-linked (GlcNAc...) asparagine; by host glycosylation sites follow: N134, N140, N143, N154, N158, N186, and N195. The segment at 155 to 194 (CSFNVTTELRDKKKQVYSLFYVEDVVNLGNENNTYRIINC) is V2. 9 N-linked (GlcNAc...) asparagine; by host glycosylation sites follow: N239, N260, N267, N274, N299, N331, N336, N351, and N356. Residues 294–327 (CHRPGNNTRGEVQIGPGMTFYNIENVVGDTRSAY) are V3. C294 and C328 are oxidised to a cystine. Residues 362 to 372 (ASGGDPEVTHH) are CD4-binding loop. Disulfide bonds link C376–C429 and C383–C402. The V4 stretch occupies residues 383–402 (CNTSQIFTDNITNGIIILPC). Residues N384, N392, N426, N432, N446, and N450 are each glycosylated (N-linked (GlcNAc...) asparagine; by host). V5 stretches follow at residues 445–456 (TNNSGNLTFRPT) and 447–456 (NSGNLTFRPT). Positions 501-522 (AAFGLGALFLGFLGAAGSTMGA) are fusion peptide. The interval 564–582 (KQLQARLLAVERYLQDQQI) is immunosuppression. C588 and C594 are disulfide-bonded. N-linked (GlcNAc...) asparagine; by host glycosylation is found at N601, N608, N616, and N628. Residues 624 to 658 (KLVSNYTGKIFGLLEEAQSQQEKNERDLLELDQWA) adopt a coiled-coil conformation. The tract at residues 653-674 (ELDQWASLWNWFDITKWLWYIK) is MPER; binding to GalCer. Residues 676 to 696 (FLMAVGGIIGLRIIMTVFSVV) form a helical membrane-spanning segment. Over 697–854 (RRVRQGYSPL…IRQGLERALL (158 aa)) the chain is Cytoplasmic. The YXXL motif; contains endocytosis signal signature appears at 703 to 706 (YSPL). A Di-leucine internalization motif motif is present at residues 853-854 (LL).

It belongs to the HIV-1 env protein family. As to quaternary structure, the mature envelope protein (Env) consists of a homotrimer of non-covalently associated gp120-gp41 heterodimers. The resulting complex protrudes from the virus surface as a spike. There seems to be as few as 10 spikes on the average virion. Interacts with host CD4, CCR5 and CXCR4. Gp120 also interacts with the C-type lectins CD209/DC-SIGN and CLEC4M/DC-SIGNR (collectively referred to as DC-SIGN(R)). Gp120 and gp41 interact with GalCer. Gp120 interacts with host ITGA4/ITGB7 complex; on CD4+ T-cells, this interaction results in rapid activation of integrin ITGAL/LFA-1, which facilitates efficient cell-to-cell spreading of HIV-1. Gp120 interacts with cell-associated heparan sulfate; this interaction increases virus infectivity on permissive cells and may be involved in infection of CD4- cells. In terms of assembly, the mature envelope protein (Env) consists of a homotrimer of non-covalently associated gp120-gp41 heterodimers. The resulting complex protrudes from the virus surface as a spike. There seems to be as few as 10 spikes on the average virion. In terms of processing, highly glycosylated by host. The high number of glycan on the protein is reffered to as 'glycan shield' because it contributes to hide protein sequence from adaptive immune system. Post-translationally, palmitoylation of the transmembrane protein and of Env polyprotein (prior to its proteolytic cleavage) is essential for their association with host cell membrane lipid rafts. Palmitoylation is therefore required for envelope trafficking to classical lipid rafts, but not for viral replication. Specific enzymatic cleavages in vivo yield mature proteins. Envelope glycoproteins are synthesized as an inactive precursor that is heavily N-glycosylated and processed likely by host cell furin in the Golgi to yield the mature SU and TM proteins. The cleavage site between SU and TM requires the minimal sequence [KR]-X-[KR]-R. About 2 of the 9 disulfide bonds of gp41 are reduced by P4HB/PDI, following binding to CD4 receptor.

It is found in the virion membrane. It localises to the host cell membrane. The protein resides in the host endosome membrane. Attaches the virus to the host lymphoid cell by binding to the primary receptor CD4. This interaction induces a structural rearrangement creating a high affinity binding site for a chemokine coreceptor like CXCR4 and/or CCR5. Acts as a ligand for CD209/DC-SIGN and CLEC4M/DC-SIGNR, which are respectively found on dendritic cells (DCs), and on endothelial cells of liver sinusoids and lymph node sinuses. These interactions allow capture of viral particles at mucosal surfaces by these cells and subsequent transmission to permissive cells. HIV subverts the migration properties of dendritic cells to gain access to CD4+ T-cells in lymph nodes. Virus transmission to permissive T-cells occurs either in trans (without DCs infection, through viral capture and transmission), or in cis (following DCs productive infection, through the usual CD4-gp120 interaction), thereby inducing a robust infection. In trans infection, bound virions remain infectious over days and it is proposed that they are not degraded, but protected in non-lysosomal acidic organelles within the DCs close to the cell membrane thus contributing to the viral infectious potential during DCs' migration from the periphery to the lymphoid tissues. On arrival at lymphoid tissues, intact virions recycle back to DCs' cell surface allowing virus transmission to CD4+ T-cells. Functionally, acts as a class I viral fusion protein. Under the current model, the protein has at least 3 conformational states: pre-fusion native state, pre-hairpin intermediate state, and post-fusion hairpin state. During fusion of viral and target intracellular membranes, the coiled coil regions (heptad repeats) assume a trimer-of-hairpins structure, positioning the fusion peptide in close proximity to the C-terminal region of the ectodomain. The formation of this structure appears to drive apposition and subsequent fusion of viral and target cell membranes. Complete fusion occurs in host cell endosomes and is dynamin-dependent, however some lipid transfer might occur at the plasma membrane. The virus undergoes clathrin-dependent internalization long before endosomal fusion, thus minimizing the surface exposure of conserved viral epitopes during fusion and reducing the efficacy of inhibitors targeting these epitopes. Membranes fusion leads to delivery of the nucleocapsid into the cytoplasm. Its function is as follows. Oligomerizes in the host endoplasmic reticulum into predominantly trimers. In a second time, gp160 transits in the host Golgi, where glycosylation is completed. The precursor is then proteolytically cleaved in the trans-Golgi and thereby activated by cellular furin or furin-like proteases to produce gp120 and gp41. The protein is Envelope glycoprotein gp160 of Pan (chimpanzees).